Reading from the N-terminus, the 718-residue chain is Calpastatin (718 aa).

Disordered stretches follow at residues 1–189 and 210–238; these read MNPA…MSST and EKKT…LSSD. A compositionally biased stretch (basic residues) spans 20-29; it reads PHSKKRHRRQ. Composition is skewed to basic and acidic residues over residues 30 to 61 and 68 to 104; these read DAKT…EHTK and HASD…KPQD. A Glycyl lysine isopeptide (Lys-Gly) (interchain with G-Cter in SUMO2) cross-link involves residue Lys-32. Lys-49 is subject to N6-acetyllysine. Ser-86 carries the post-translational modification Phosphoserine. Residues 114–124 show a composition bias toward low complexity; that stretch reads AAGTTAAPGKA. Phosphoserine is present on residues Ser-133, Ser-222, and Ser-243. The stretch at 170-222 is one Inhibitory domain 1 repeat; the sequence is TQEDSTAYTGPEISDPMSSTYIEELGKREVTIPPKYRELLEKKTGVAGPPPDS. 2 disordered regions span residues 266-291 and 320-509; these read ESAK…AMSD and EAKR…QLPA. Residue Ser-290 is modified to Blocked amino end (Ser); in form erythrocyte. The stretch at 307–359 is one Inhibitory domain 2 repeat; that stretch reads EPELDLSSIKEVAEAKRKEEKVEKCGEDDETVPAEYRLKPATDKDGKPLLPEP. Basic and acidic residues-rich tracts occupy residues 320–331, 342–377, and 384–399; these read EAKRKEEKVEKC, YRLK…ELSK, and SNEK…EESK. Residues Ser-367, Ser-369, and Ser-376 each carry the phosphoserine modification. Positions 400 to 411 are enriched in low complexity; it reads AAVPAPVAEAVP. A Phosphoserine modification is found at Ser-444. Residues 446 to 496 show a composition bias toward basic and acidic residues; sequence GRKEADPEEGKPVADKIKEKSKEEEREKLGEKEETIPPDYRLEEAKDKDGK. Residues 450–503 form an Inhibitory domain 3 repeat; that stretch reads ADPEEGKPVADKIKEKSKEEEREKLGEKEETIPPDYRLEEAKDKDGKPLLPSEP. Phosphoserine is present on residues Ser-520, Ser-531, Ser-579, and Ser-581. The disordered stretch occupies residues 543 to 718; it reads VSEVVSQSPA…KPKANEKNAS (176 aa). Positions 566–579 are enriched in basic and acidic residues; sequence PSNKELDDALDKLS. The Inhibitory domain 4 repeat unit spans residues 587–640; sequence PDPDENKPMEDKVKERAKKEHKDKLGERDDTIPPEYRHLLDQGEQDKPEKPPTK. Basic and acidic residues-rich tracts occupy residues 587–650 and 706–718; these read PDPD…KPAG and ETSK…KNAS.

This sequence belongs to the protease inhibitor I27 (calpastatin) family.

Specific inhibition of calpain (calcium-dependent cysteine protease). Plays a key role in postmortem tenderization of meat and have been proposed to be involved in muscle protein degradation in living tissue. This Oryctolagus cuniculus (Rabbit) protein is Calpastatin (CAST).